Reading from the N-terminus, the 179-residue chain is Protein GrpE (179 aa).

Residues 1–45 (MSEEKLTQDPTAEEEQTETADQQESADVNWEQEAAHWKAQAEEHQ) form a disordered region. Residues 33–45 (EAAHWKAQAEEHQ) show a composition bias toward basic and acidic residues.

It belongs to the GrpE family. As to quaternary structure, homodimer.

The protein resides in the cytoplasm. In terms of biological role, participates actively in the response to hyperosmotic and heat shock by preventing the aggregation of stress-denatured proteins, in association with DnaK and GrpE. It is the nucleotide exchange factor for DnaK and may function as a thermosensor. Unfolded proteins bind initially to DnaJ; upon interaction with the DnaJ-bound protein, DnaK hydrolyzes its bound ATP, resulting in the formation of a stable complex. GrpE releases ADP from DnaK; ATP binding to DnaK triggers the release of the substrate protein, thus completing the reaction cycle. Several rounds of ATP-dependent interactions between DnaJ, DnaK and GrpE are required for fully efficient folding. This Brevibacillus choshinensis protein is Protein GrpE.